A 119-amino-acid chain; its full sequence is Large ribosomal subunit protein uL24 (119 aa).

It belongs to the universal ribosomal protein uL24 family. In terms of assembly, part of the 50S ribosomal subunit.

In terms of biological role, one of two assembly initiator proteins, it binds directly to the 5'-end of the 23S rRNA, where it nucleates assembly of the 50S subunit. Functionally, located at the polypeptide exit tunnel on the outside of the subunit. The sequence is that of Large ribosomal subunit protein uL24 from Methanococcus maripaludis (strain DSM 14266 / JCM 13030 / NBRC 101832 / S2 / LL).